The following is a 410-amino-acid chain: D-amino acid dehydrogenase (410 aa).

Gly9–Gly14 provides a ligand contact to FAD.

The protein belongs to the DadA oxidoreductase family. The cofactor is FAD.

It localises to the cell inner membrane. It catalyses the reaction a D-alpha-amino acid + a quinone + H2O = a 2-oxocarboxylate + a quinol + NH4(+). Functionally, catalyzes the oxidative deamination of D-amino acids. Has broad substrate specificity; is mostly active on D-proline, and to a lesser extent, on several other D-amino acids such as D-alanine, D-phenylalanine and D-serine. Mediates electron transport from D-proline to coenzyme Q1 in vitro, and is involved in the electron transport chain from D-proline to the c-type cytochrome in vivo. This chain is D-amino acid dehydrogenase, found in Helicobacter pylori (strain ATCC 700392 / 26695) (Campylobacter pylori).